Reading from the N-terminus, the 564-residue chain is Proline--tRNA ligase (564 aa).

The protein belongs to the class-II aminoacyl-tRNA synthetase family. ProS type 1 subfamily. Homodimer.

Its subcellular location is the cytoplasm. It carries out the reaction tRNA(Pro) + L-proline + ATP = L-prolyl-tRNA(Pro) + AMP + diphosphate. Functionally, catalyzes the attachment of proline to tRNA(Pro) in a two-step reaction: proline is first activated by ATP to form Pro-AMP and then transferred to the acceptor end of tRNA(Pro). As ProRS can inadvertently accommodate and process non-cognate amino acids such as alanine and cysteine, to avoid such errors it has two additional distinct editing activities against alanine. One activity is designated as 'pretransfer' editing and involves the tRNA(Pro)-independent hydrolysis of activated Ala-AMP. The other activity is designated 'posttransfer' editing and involves deacylation of mischarged Ala-tRNA(Pro). The misacylated Cys-tRNA(Pro) is not edited by ProRS. The chain is Proline--tRNA ligase from Xylella fastidiosa (strain Temecula1 / ATCC 700964).